Reading from the N-terminus, the 317-residue chain is Transcription cofactor vestigial-like protein 2 (317 aa).

Disordered regions lie at residues 41 to 76 (CNAS…ERPP), 108 to 128 (SQPS…SSGP), 191 to 214 (TEPW…GGAL), and 253 to 293 (RLAT…PSGD). Low complexity predominate over residues 44–57 (SPSSSGSGSSSFSS). Over residues 63–76 (IKEEEGSPEKERPP) the composition is skewed to basic and acidic residues. Residues 108-120 (SQPSSYSPSCTSS) are compositionally biased toward low complexity. The segment covering 196-206 (HAHPHHAHPHH) has biased composition (basic residues). Residues 272 to 292 (KGEPAGAAWAGPGGPFASPSG) are compositionally biased toward low complexity.

Belongs to the vestigial family. Interacts with TEFs. Binds to TEAD1/TEF1. Skeletal muscle.

The protein localises to the nucleus. Functionally, may act as a specific coactivator for the mammalian TEFs. May play a role in the development of skeletal muscles. This chain is Transcription cofactor vestigial-like protein 2 (VGLL2), found in Homo sapiens (Human).